A 198-amino-acid chain; its full sequence is Ribosome maturation factor RimP (198 aa).

This sequence belongs to the RimP family.

It is found in the cytoplasm. In terms of biological role, required for maturation of 30S ribosomal subunits. This is Ribosome maturation factor RimP from Rhizobium etli (strain ATCC 51251 / DSM 11541 / JCM 21823 / NBRC 15573 / CFN 42).